The chain runs to 224 residues: Small ribosomal subunit protein uS2 (224 aa).

Residues 1 to 14 (MAEAKPAPEKEAAV) show a composition bias toward basic and acidic residues. The tract at residues 1–32 (MAEAKPAPEKEAAVKTESVPVADDEAASAKEG) is disordered.

The protein belongs to the universal ribosomal protein uS2 family.

This is Small ribosomal subunit protein uS2 from Methanosarcina mazei (strain ATCC BAA-159 / DSM 3647 / Goe1 / Go1 / JCM 11833 / OCM 88) (Methanosarcina frisia).